The sequence spans 267 residues: uncharacterized protein (267 aa).

The protein belongs to the lin-8 family.

This is an uncharacterized protein from Caenorhabditis elegans.